A 208-amino-acid polypeptide reads, in one-letter code: Ras-related protein M-Ras (208 aa).

GTP is bound by residues aspartate 21, glycine 22, glycine 23, valine 24, glycine 25, lysine 26, serine 27, alanine 28, phenylalanine 38, valine 39, proline 40, tyrosine 42, proline 44, and threonine 45. Mg(2+) is bound at residue serine 27. Positions 42 to 50 (YDPTIEDSY) match the Effector region motif. Mg(2+) is bound by residues threonine 45 and aspartate 67. Residues glycine 70, asparagine 126, lysine 127, aspartate 129, serine 156, alanine 157, and lysine 158 each coordinate GTP. At cysteine 205 the chain carries Cysteine methyl ester. Residue cysteine 205 is the site of S-geranylgeranyl cysteine attachment. Residues 206 to 208 (VIL) constitute a propeptide, removed in mature form.

The protein belongs to the small GTPase superfamily. Ras family. In terms of assembly, component of the SHOC2-MRAS-PP1c (SMP) holophosphatase complex consisting of SHOC2, GTP-bound M-Ras/MRAS and the catalytic subunit of protein phosphatase 1 (either PPP1CA, PPP1CB or PPP1CC). Interacts (active GTP-bound form) with both SHOC2 and PP1c (all isoforms) to form a tertiary complex; SHOC2 and PP1c preferably bind M-Ras/MRAS, but they also bind K-Ras/KRAS, N-Ras/NRAS and H-Ras/HRAS. Interacts with RGL3. Interacts (active GTP-bound form preferentially) with RGS14. It depends on Mg(2+) as a cofactor. Expressed in skeletal muscle cells.

It is found in the cell membrane. It carries out the reaction GTP + H2O = GDP + phosphate + H(+). Functionally, signal transducer in the Ras-MAPK signaling pathway that regulates cell proliferation and survival. Core component of the SHOC2-MRAS-PP1c (SMP) holophosphatase complex that regulates the MAPK pathway activation. The formation of the SMP complex only occurs when MRAS is GTP-bound. MRAS has low intrinsic GTPase activity and may require additional factors for activation. The SMP complex specifically dephosphorylates the inhibitory phosphorylation at 'Ser-259' of RAF1 kinase, 'Ser-365' of BRAF kinase and 'Ser-214' of ARAF kinase, stimulating their kinase activities. The sequence is that of Ras-related protein M-Ras (Mras) from Rattus norvegicus (Rat).